The chain runs to 892 residues: Isoleucine--tRNA ligase (892 aa).

The short motif at 60-70 (PYANGSIHIGH) is the 'HIGH' region element. Glutamate 552 is an L-isoleucyl-5'-AMP binding site. The 'KMSKS' region signature appears at 593 to 597 (KMSKS). Lysine 596 provides a ligand contact to ATP. 4 residues coordinate Zn(2+): cysteine 862, cysteine 865, cysteine 879, and cysteine 882.

The protein belongs to the class-I aminoacyl-tRNA synthetase family. IleS type 1 subfamily. In terms of assembly, monomer. Zn(2+) serves as cofactor.

It localises to the cytoplasm. It catalyses the reaction tRNA(Ile) + L-isoleucine + ATP = L-isoleucyl-tRNA(Ile) + AMP + diphosphate. Catalyzes the attachment of isoleucine to tRNA(Ile). As IleRS can inadvertently accommodate and process structurally similar amino acids such as valine, to avoid such errors it has two additional distinct tRNA(Ile)-dependent editing activities. One activity is designated as 'pretransfer' editing and involves the hydrolysis of activated Val-AMP. The other activity is designated 'posttransfer' editing and involves deacylation of mischarged Val-tRNA(Ile). The chain is Isoleucine--tRNA ligase from Mycoplasmopsis agalactiae (strain NCTC 10123 / CIP 59.7 / PG2) (Mycoplasma agalactiae).